We begin with the raw amino-acid sequence, 102 residues long: UPF0473 protein SERP1179 (102 aa).

The protein belongs to the UPF0473 family.

In Staphylococcus epidermidis (strain ATCC 35984 / DSM 28319 / BCRC 17069 / CCUG 31568 / BM 3577 / RP62A), this protein is UPF0473 protein SERP1179.